We begin with the raw amino-acid sequence, 274 residues long: Large ribosomal subunit protein uL2cz/uL2cy (274 aa).

Disordered regions lie at residues 1–20 (MAIH…AVDS) and 223–274 (MNPV…RRSK).

This sequence belongs to the universal ribosomal protein uL2 family. In terms of assembly, part of the 50S ribosomal subunit.

The protein localises to the plastid. The protein resides in the chloroplast. This is Large ribosomal subunit protein uL2cz/uL2cy (rpl2-A) from Eucalyptus globulus subsp. globulus (Tasmanian blue gum).